A 363-amino-acid chain; its full sequence is Methyltransferase pynC (363 aa).

Residues Gly199–Gly200, Asp225, Ser254–Phe255, Arg270, and Arg271 each bind S-adenosyl-L-methionine.

The protein belongs to the class I-like SAM-binding methyltransferase superfamily. Cation-independent O-methyltransferase family.

It participates in secondary metabolite biosynthesis. Functionally, methyltransferase; part of the gene cluster that mediates the biosynthesis of pyranonigrins, a family of antioxidative compounds. The first step of pyranonigrins biosynthesis is performed by the hybrid PKS-NRPS synthetase that condenses 6 malonyl-CoA units to an acetyl starter unit, to form a 1,3,5-trioxotetradecane-6,8-dienyl-ACP. The enoyl reductase (ER) domain of pynA is likely to be functional during the first two rounds of polyketide chain extension, to generate the saturated C-C bonds of the alkyl side chain. PynA subsequently forms the amide bond between the acyl chain and L-serine. Although pynA has a terminal reductase domain, it appears to require the thioesterase pynI for the release of the straight-chain intermediate from pynA via the formation of a tetramic acid pyranonigrin J. The methyltransferase pynC then coverts pyranonigrin J to pyranonigrin I via N-methylation. The FAD-dependent monooxygenase pynG catalyzes an epoxidation-mediated cyclization to form the dihydro-gamma-pyrone moiety, followed by pynD-catalyzed oxidation of the alcohol to the ketone and enolization to yield the characteristic tetramic acid-fused gamma-pyrone core of pyranonigrin H. Pyranonigrin H is substrate of pynH for dehydration-mediated exo-methylene formation from the serine side chain to produce pyranonigrin E, before the oxidase pynE reduces the exo-methylene of pyranonigrin E into a pendant methyl to form pyranonigrin G. The FAD-linked oxidoreductase pynB performs the reverse reaction and converts pyranonigrin G back to pyranonigrin E. This Aspergillus niger (strain ATCC MYA-4892 / CBS 513.88 / FGSC A1513) protein is Methyltransferase pynC.